The primary structure comprises 349 residues: Peroxidase C3 (349 aa).

An N-terminal signal peptide occupies residues 1–29; that stretch reads MGFSPLISCSAMGALILSCLLLQASNSNA. 4 cysteine pairs are disulfide-bonded: Cys40–Cys120, Cys73–Cys78, Cys126–Cys329, and Cys206–Cys238. The Proton acceptor role is filled by His71. Positions 72, 75, 77, 79, and 81 each coordinate Ca(2+). An N-linked (GlcNAc...) asparagine glycan is attached at Asn86. Substrate is bound at residue Pro168. Residue His199 coordinates heme b. Ca(2+) is bound at residue Thr200. N-linked (GlcNAc...) asparagine glycosylation is found at Asn217 and Asn243. Positions 251, 254, and 259 each coordinate Ca(2+).

This sequence belongs to the peroxidase family. Classical plant (class III) peroxidase subfamily. It depends on Ca(2+) as a cofactor. Heme b is required as a cofactor.

It is found in the secreted. Its subcellular location is the vacuole. The enzyme catalyses 2 a phenolic donor + H2O2 = 2 a phenolic radical donor + 2 H2O. Removal of H(2)O(2), oxidation of toxic reductants, biosynthesis and degradation of lignin, suberization, auxin catabolism, response to environmental stresses such as wounding, pathogen attack and oxidative stress. These functions might be dependent on each isozyme/isoform in each plant tissue. This is Peroxidase C3 (PRXC3) from Armoracia rusticana (Horseradish).